The primary structure comprises 153 residues: Arginine repressor (153 aa).

This sequence belongs to the ArgR family.

It localises to the cytoplasm. It functions in the pathway amino-acid biosynthesis; L-arginine biosynthesis [regulation]. Its function is as follows. Regulates arginine biosynthesis genes. In Syntrophomonas wolfei subsp. wolfei (strain DSM 2245B / Goettingen), this protein is Arginine repressor.